A 263-amino-acid polypeptide reads, in one-letter code: Proteasome subunit beta type-4 (263 aa).

N-acetylmethionine is present on M1. Residues 1–44 (MEAFWESRTGHWAGGPAPGQFYRVPSTPSCLMDPMSAPARPITR) constitute a propeptide that is removed on maturation. Phosphoserine is present on S26. The residue at position 101 (Y101) is a Phosphotyrosine.

It belongs to the peptidase T1B family. In terms of assembly, the 26S proteasome consists of a 20S proteasome core and two 19S regulatory subunits. The 20S proteasome core is a barrel-shaped complex made of 28 subunits that are arranged in four stacked rings. The two outer rings are each formed by seven alpha subunits, and the two inner rings are formed by seven beta subunits. The proteolytic activity is exerted by three beta-subunits PSMB5, PSMB6 and PSMB7. Forms a ternary complex with SMAD1 and OAZ1 before PSMB4 is incorporated into the 20S proteasome. Interacts with PRPF19.

Its subcellular location is the cytoplasm. The protein resides in the nucleus. Its function is as follows. Non-catalytic component of the 20S core proteasome complex involved in the proteolytic degradation of most intracellular proteins. This complex plays numerous essential roles within the cell by associating with different regulatory particles. Associated with two 19S regulatory particles, forms the 26S proteasome and thus participates in the ATP-dependent degradation of ubiquitinated proteins. The 26S proteasome plays a key role in the maintenance of protein homeostasis by removing misfolded or damaged proteins that could impair cellular functions, and by removing proteins whose functions are no longer required. Associated with the PA200 or PA28, the 20S proteasome mediates ubiquitin-independent protein degradation. This type of proteolysis is required in several pathways including spermatogenesis (20S-PA200 complex) or generation of a subset of MHC class I-presented antigenic peptides (20S-PA28 complex). SMAD1/OAZ1/PSMB4 complex mediates the degradation of the CREBBP/EP300 repressor SNIP1. This chain is Proteasome subunit beta type-4 (Psmb4), found in Rattus norvegicus (Rat).